We begin with the raw amino-acid sequence, 61 residues long: Small ribosomal subunit protein uS14 (61 aa).

4 residues coordinate Zn(2+): C24, C27, C40, and C43.

The protein belongs to the universal ribosomal protein uS14 family. Zinc-binding uS14 subfamily. As to quaternary structure, part of the 30S ribosomal subunit. Contacts proteins S3 and S10. It depends on Zn(2+) as a cofactor.

In terms of biological role, binds 16S rRNA, required for the assembly of 30S particles and may also be responsible for determining the conformation of the 16S rRNA at the A site. This chain is Small ribosomal subunit protein uS14, found in Rhodopirellula baltica (strain DSM 10527 / NCIMB 13988 / SH1).